Consider the following 387-residue polypeptide: Postreplication repair E3 ubiquitin-protein ligase rad18 (387 aa).

An RING-type zinc finger spans residues 29 to 67; that stretch reads CLICHEYFRAPLITSCSHTFCSFCIRDYLREHPMCPACR. Residues 119–153 form a disordered region; it reads DSASGDEEWEDDLASNSSPASIAKKTSRDSKKRKR. Residues 122–131 are compositionally biased toward acidic residues; it reads SGDEEWEDDL. The UBZ4-type zinc-finger motif lies at 156–183; it reads LVHCPACSNLVPHNQINQHLDSCLNSPS. Cys159, Cys162, His174, and Cys178 together coordinate Zn(2+). The disordered stretch occupies residues 174–206; that stretch reads HLDSCLNSPSSPSSSSSPYKNKDNSKSNSLLSF. The span at 177-192 shows a compositional bias: low complexity; the sequence is SCLNSPSSPSSSSSPY. The SAP domain maps to 240 to 274; the sequence is YALLSESKIRSKLSEMGLPTDGHKQLLQRRHAKWV. Residues 335 to 387 are disordered; sequence KQSTTNKNDSLRNTAVESSTEPSTSNGFPATSVSPPLTIDLTNSQTGSDGPQS.

This sequence belongs to the RAD18 family. Interacts with E2 ubc2, forming a complex with ubiquitin ligase activity.

It is found in the nucleus. The enzyme catalyses S-ubiquitinyl-[E2 ubiquitin-conjugating enzyme]-L-cysteine + [acceptor protein]-L-lysine = [E2 ubiquitin-conjugating enzyme]-L-cysteine + N(6)-ubiquitinyl-[acceptor protein]-L-lysine.. The protein operates within protein modification; protein ubiquitination. E3 RING-finger protein, member of the UBC2/RAD6 epistasis group. Associates to the E2 ubiquitin conjugating enzyme ubc2/rad6 to form the ubc2-rad18 ubiquitin ligase complex involved in postreplicative repair (PRR) of damaged DNA. This Schizosaccharomyces pombe (strain 972 / ATCC 24843) (Fission yeast) protein is Postreplication repair E3 ubiquitin-protein ligase rad18 (rhp18).